The primary structure comprises 173 residues: MKNIVLIGFMGTGKTSVGKLVAKKLGFDFVDVDEVIEKATGMEISEIFSKFGESRFRDIEEEMIKLITPKKRQVIATGGGVVLRDENMKRLKKDGVIFCLRASENVIFERLKQTTNRPLLQVENPEERIKELLQKRMPLYEKADFCIDTEGLTPEEVAEKIIKEYERLSNGKT.

11–16 (GTGKTS) is a binding site for ATP. Thr-15 serves as a coordination point for Mg(2+). Residues Asp-33, Arg-57, and Gly-79 each coordinate substrate. Arg-117 contributes to the ATP binding site. Arg-136 serves as a coordination point for substrate.

This sequence belongs to the shikimate kinase family. Monomer. Requires Mg(2+) as cofactor.

The protein localises to the cytoplasm. The enzyme catalyses shikimate + ATP = 3-phosphoshikimate + ADP + H(+). The protein operates within metabolic intermediate biosynthesis; chorismate biosynthesis; chorismate from D-erythrose 4-phosphate and phosphoenolpyruvate: step 5/7. In terms of biological role, catalyzes the specific phosphorylation of the 3-hydroxyl group of shikimic acid using ATP as a cosubstrate. The sequence is that of Shikimate kinase from Thermodesulfovibrio yellowstonii (strain ATCC 51303 / DSM 11347 / YP87).